Reading from the N-terminus, the 976-residue chain is 3-O-beta-L-arabinopyranosyl-alpha-L-arabinofuranosidase (976 aa).

The signal sequence occupies residues 1–28 (MSHRNKALVAIVAGTALLISSGAAIGQA). Glutamate 190 (proton donor) is an active-site residue. Glutamate 315 (nucleophile) is an active-site residue. The CBM6 domain occupies 519–654 (LLVEEVENTV…DNTLDKFLLY (136 aa)).

It belongs to the glycosyl hydrolase 39 family.

Its subcellular location is the secreted. It carries out the reaction Hydrolysis of beta-L-Arap-(1-&gt;3)-L-Araf disaccharides from non-reducing terminals in branches of type II arabinogalactan attached to proteins.. In terms of biological role, hydrolase involved in the degradation of the gum arabic arabinogalactan protein (AGP) and larch AGP. Catalyzes the release of 3-O-beta-L-arabinopyranosyl-L-arabinose (beta-L-Arap-(1-&gt;3)-L-Ara) from gum arabic AGP and larch AGP. Also cleaves a small amount of beta-L-Arap-(1-&gt;3)-L-Ara from sugar beet arabinan, but wheat AGP cannot be used as a substrate. Can also release 3-O-alpha-D-galactopyranosyl-L-arabinose (alpha-D-Galp-(1-&gt;3)-L-Ara) from gum arabic AGP, with low efficiency. This Bifidobacterium pseudocatenulatum protein is 3-O-beta-L-arabinopyranosyl-alpha-L-arabinofuranosidase.